Reading from the N-terminus, the 552-residue chain is Glutamyl-tRNA reductase 1, chloroplastic (552 aa).

Substrate contacts are provided by residues 150 to 153, serine 210, 215 to 217, and glutamine 221; these read TCNR and EGQ. Cysteine 151 functions as the Nucleophile in the catalytic mechanism. Residue 292–297 coordinates NADP(+); it reads GAGKMG.

Belongs to the glutamyl-tRNA reductase family. Primarily in cotyledons and hypocotyls of greening cucumber seedlings.

The protein resides in the plastid. The protein localises to the chloroplast. It carries out the reaction (S)-4-amino-5-oxopentanoate + tRNA(Glu) + NADP(+) = L-glutamyl-tRNA(Glu) + NADPH + H(+). It functions in the pathway porphyrin-containing compound metabolism; protoporphyrin-IX biosynthesis; 5-aminolevulinate from L-glutamyl-tRNA(Glu): step 1/2. Catalyzes the NADPH-dependent reduction of glutamyl-tRNA(Glu) to glutamate 1-semialdehyde (GSA). This Cucumis sativus (Cucumber) protein is Glutamyl-tRNA reductase 1, chloroplastic (HEMA1).